A 308-amino-acid chain; its full sequence is Ribosomal protein L11 methyltransferase (308 aa).

S-adenosyl-L-methionine-binding residues include Thr-157, Gly-178, Asp-200, and Asn-243.

This sequence belongs to the methyltransferase superfamily. PrmA family.

Its subcellular location is the cytoplasm. The enzyme catalyses L-lysyl-[protein] + 3 S-adenosyl-L-methionine = N(6),N(6),N(6)-trimethyl-L-lysyl-[protein] + 3 S-adenosyl-L-homocysteine + 3 H(+). In terms of biological role, methylates ribosomal protein L11. The sequence is that of Ribosomal protein L11 methyltransferase from Desulforamulus reducens (strain ATCC BAA-1160 / DSM 100696 / MI-1) (Desulfotomaculum reducens).